The following is a 1049-amino-acid chain: Protein argonaute 12 (1049 aa).

Positions 1-53 (MSSRGGGGGGRRGGRGGGGGREGGGGGGGGGGRGGQGRGDLGVVGERQGGGRG) are enriched in gly residues. Disordered stretches follow at residues 1 to 101 (MSSR…GVQV) and 144 to 192 (GGAP…KAVT). Over residues 54 to 65 (AGERGGRHDAPR) the composition is skewed to basic and acidic residues. Positions 66 to 76 (GRGGVAVGAGA) are enriched in gly residues. The span at 144–160 (GGAPPAGQGSSLAAAQG) shows a compositional bias: low complexity. Residues 404–515 (PVMDFAVQYL…LPMEVCSILE (112 aa)) form the PAZ domain. A Piwi domain is found at 694–1012 (LLIVILTEIS…GAFRARYYME (319 aa)).

This sequence belongs to the argonaute family. Ago subfamily.

In terms of biological role, probably involved in the RNA silencing pathway. May bind to short RNAs such as microRNAs (miRNAs) or short interfering RNAs (siRNAs), and represses the translation of mRNAs which are complementary to them. This chain is Protein argonaute 12 (AGO12), found in Oryza sativa subsp. japonica (Rice).